Here is a 126-residue protein sequence, read N- to C-terminus: Adrenocorticotropic hormone receptor (126 aa).

The chain crosses the membrane as a helical span at residues 1 to 25 (VLPEEIFFTISIVGVLENLIVLLAV). Over 26–34 (FKNKNLQAP) the chain is Cytoplasmic. A helical membrane pass occupies residues 35-55 (MYFFICSLAISDMLGSLYKIL). Residues 56–80 (ENILIILRNMGYLKPRGSFETTADD) lie on the Extracellular side of the membrane. A helical transmembrane segment spans residues 81–102 (IIDSLFVLSLLGAIFSLSVIAA). Over 103–123 (DRYITIFHALRYHSIVTMRRT) the chain is Cytoplasmic. The chain crosses the membrane as a helical span at residues 124-126 (VVV).

Belongs to the G-protein coupled receptor 1 family. Interacts with MRAP; increasing ligand-sensitivity and generation of cAMP. Interacts with MRAP2; competing with MRAP for binding to MC2R and impairing the binding of corticotropin (ACTH).

It is found in the cell membrane. Receptor for corticotropin (ACTH). This receptor is mediated by G proteins (G(s)) which activate adenylate cyclase (cAMP). The polypeptide is Adrenocorticotropic hormone receptor (MC2R) (Papio hamadryas (Hamadryas baboon)).